A 421-amino-acid polypeptide reads, in one-letter code: Phosphoribosylamine--glycine ligase (421 aa).

Residues 108–314 (KEIMVKYNVP…FAQNIDDIMM (207 aa)) enclose the ATP-grasp domain. Position 134-195 (134-195 (IEEQGAPIVV…EEFLDGEEFS (62 aa))) interacts with ATP. Mg(2+)-binding residues include glutamate 284 and asparagine 286.

It belongs to the GARS family. Mg(2+) serves as cofactor. Requires Mn(2+) as cofactor.

It catalyses the reaction 5-phospho-beta-D-ribosylamine + glycine + ATP = N(1)-(5-phospho-beta-D-ribosyl)glycinamide + ADP + phosphate + H(+). It participates in purine metabolism; IMP biosynthesis via de novo pathway; N(1)-(5-phospho-D-ribosyl)glycinamide from 5-phospho-alpha-D-ribose 1-diphosphate: step 2/2. The polypeptide is Phosphoribosylamine--glycine ligase (Streptococcus pyogenes serotype M1).